A 312-amino-acid chain; its full sequence is Zygote arrest protein 1.L (312 aa).

Disordered stretches follow at residues 79-133 (RDVG…VRFP) and 150-205 (FQDK…DQTR). 2 stretches are compositionally biased toward polar residues: residues 86-95 (NPRQDASVQC) and 113-128 (PQQSPPEQGSPASPTK). Positions 152-196 (DKGENLSEKTEALRSEGSRGEGGRPEGKQEDGEIKEQTKMDKADQ) are enriched in basic and acidic residues. The 3CxxC-type zinc finger occupies 214–297 (KYGYYHCKDC…RQDLCGRCKG (84 aa)).

This sequence belongs to the ZAR1 family. Ovary.

The protein localises to the cytoplasm. It localises to the cytoplasmic ribonucleoprotein granule. Functionally, mRNA-binding protein required for maternal mRNA storage, translation and degradation during oocyte maturation. Probably promotes formation of some phase-separated membraneless compartment that stores maternal mRNAs in oocytes: acts by undergoing liquid-liquid phase separation upon binding to maternal mRNAs. Binds to the 3'-UTR of maternal mRNAs in immature oocytes, inhibiting their translation. The protein is Zygote arrest protein 1.L of Xenopus laevis (African clawed frog).